Consider the following 313-residue polypeptide: UPF0761 membrane protein VV1_0885 (313 aa).

6 consecutive transmembrane segments (helical) span residues 41–61 (YLAY…LSIL), 104–124 (MTAV…SNID), 139–159 (AVFS…LVGA), 185–205 (LLRW…YLLV), 215–235 (AVVG…GFAA), and 249–269 (ALAA…IVLI). Positions 294 to 313 (PNNDTELEKDTQRDRFDSES) are disordered. Residues 299 to 313 (ELEKDTQRDRFDSES) are compositionally biased toward basic and acidic residues.

It belongs to the UPF0761 family.

It is found in the cell inner membrane. The sequence is that of UPF0761 membrane protein VV1_0885 from Vibrio vulnificus (strain CMCP6).